Here is a 221-residue protein sequence, read N- to C-terminus: NAD(P)H-hydrate epimerase (221 aa).

Residues 9–219 enclose the YjeF N-terminal domain; that stretch reads MRELETAAVK…NIGLPKELLS (211 aa). 60–64 is a binding site for (6S)-NADPHX; it reads GNGGD. 2 residues coordinate K(+): Asn-61 and Asp-131. (6S)-NADPHX-binding positions include 135 to 141, Tyr-146, and Asp-164; that span reads GIGFKGE. Ser-167 is a K(+) binding site.

It belongs to the NnrE/AIBP family. It depends on K(+) as a cofactor.

The catalysed reaction is (6R)-NADHX = (6S)-NADHX. The enzyme catalyses (6R)-NADPHX = (6S)-NADPHX. In terms of biological role, catalyzes the epimerization of the S- and R-forms of NAD(P)HX, a damaged form of NAD(P)H that is a result of enzymatic or heat-dependent hydration. This is a prerequisite for the S-specific NAD(P)H-hydrate dehydratase to allow the repair of both epimers of NAD(P)HX. The sequence is that of NAD(P)H-hydrate epimerase from Elusimicrobium minutum (strain Pei191).